The primary structure comprises 240 residues: Sugar fermentation stimulation protein homolog (240 aa).

This sequence belongs to the SfsA family.

This Saccharolobus solfataricus (strain ATCC 35092 / DSM 1617 / JCM 11322 / P2) (Sulfolobus solfataricus) protein is Sugar fermentation stimulation protein homolog.